The sequence spans 253 residues: MGAEGAVRGARPVPVRAQRVPKYYRLKRHLLDMTDTLPPGTPVPPERTLAAEFDTSRTTVPQALQELVVEGRLERIQGKGTFVAKPKVSQALQLTSYTEDMRAQGLEPTSQLLDIGYVTADDTLAGLLDISTGGRVLRIERLRLASGEPMAIETTHLSAKRFPALRRSLVKYTSLYTALAEVYDVRLAEAEETIETSLATPREAGLLGTDVGLPMLMLSRHSVDGQGEPVEWVRSVYRGDRYKFVARLKRGTD.

The HTH gntR-type domain occupies 16–86 (RAQRVPKYYR…QGKGTFVAKP (71 aa)). Residues 46 to 65 (ERTLAAEFDTSRTTVPQALQ) constitute a DNA-binding region (H-T-H motif).

It is found in the cytoplasm. Global regulator that is part of the nutrient-sensing system. In the absence of glucosamine 6-P (GlcN6P), represses the phosphotransferase system (PTS) specific for the uptake of N-acetylglucosamine (PTSNag), and genes involved in the metabolism of chitin, as well as several genes involved in development, thereby linking carbon availability to morphogenesis. Regulates the dasABC transport operon involved in glucose-related morphogenesis. Essential for development. This is HTH-type transcriptional repressor DasR (dasR) from Streptomyces griseus.